The following is a 752-amino-acid chain: MAP/microtubule affinity-regulating kinase 4 (752 aa).

The segment at 1-36 (MSSRTVLAPGNDRNSDTHGTLGSGRSSDKGPSWSSR) is disordered. One can recognise a Protein kinase domain in the interval 59–310 (YRLLRTIGKG…LEQIMKDKWI (252 aa)). ATP is bound by residues 65-73 (IGKGNFAKV) and lysine 88. Catalysis depends on aspartate 181, which acts as the Proton acceptor. The residue at position 214 (threonine 214) is a Phosphothreonine; by LKB1. Residues 324–368 (EPEEDFGDTKRIEVMVGMGYTREEIKESLTSQKYNEVTATYLLLG) form the UBA domain. The interval 385–614 (ARVRAPSDTT…PAGRPRPTTN (230 aa)) is disordered. Positions 391–406 (SDTTNGTSSSKGTSHS) are enriched in low complexity. Phosphoserine occurs at positions 423 and 543. Over residues 544–553 (PSSHSLAPPS) the composition is skewed to low complexity. The KA1 domain maps to 703-752 (AGGPEPLSHFEVEVCQLPRPGLRGVLFRRVAGTALAFRTLVTRISNDLEL).

This sequence belongs to the protein kinase superfamily. CAMK Ser/Thr protein kinase family. SNF1 subfamily. Interacts with MAPT/TAU. Interacts with gamma-tubulin. Interacts with ODF2. Interacts with USP9X. Interacts with YWHAQ. Interacts with NLRP3; promoting NLRP3 recruitment to microtubule organizing center (MTOC). Requires Mg(2+) as cofactor. Ubiquitinated with 'Lys-29'- and 'Lys-33'-linked polyubiquitins which appear to impede LKB1-mediated phosphorylation. Deubiquitinated by USP9X. Post-translationally, phosphorylated at Thr-214 by STK11/LKB1 in complex with STE20-related adapter-alpha (STRADA) pseudo kinase and CAB39. Phosphorylated throughout the cell cycle. Ubiquitous. Isoform 2 is brain-specific. Expressed at highest levels in brain and testis. Also expressed in heart, lung, liver, muscle, kidney and spleen.

It localises to the cytoplasm. Its subcellular location is the cytoskeleton. The protein resides in the microtubule organizing center. The protein localises to the centrosome. It is found in the cilium basal body. It localises to the cilium axoneme. Its subcellular location is the cell projection. The protein resides in the dendrite. The enzyme catalyses L-seryl-[protein] + ATP = O-phospho-L-seryl-[protein] + ADP + H(+). The catalysed reaction is L-threonyl-[protein] + ATP = O-phospho-L-threonyl-[protein] + ADP + H(+). With respect to regulation, activated by phosphorylation on Thr-214. Serine/threonine-protein kinase. Phosphorylates the microtubule-associated protein MAPT/TAU. Also phosphorylates the microtubule-associated proteins MAP2 and MAP4. Involved in regulation of the microtubule network, causing reorganization of microtubules into bundles. Required for the initiation of axoneme extension during cilium assembly. Regulates the centrosomal location of ODF2 and phosphorylates ODF2 in vitro. Plays a role in cell cycle progression, specifically in the G1/S checkpoint. Reduces neuronal cell survival. Plays a role in energy homeostasis by regulating satiety and metabolic rate. Promotes adipogenesis by activating JNK1 and inhibiting the p38MAPK pathway, and triggers apoptosis by activating the JNK1 pathway. Phosphorylates mTORC1 complex member RPTOR and acts as a negative regulator of the mTORC1 complex, probably due to disruption of the interaction between phosphorylated RPTOR and the RRAGA/RRAGC heterodimer which is required for mTORC1 activation. Involved in NLRP3 positioning along microtubules by mediating NLRP3 recruitment to microtubule organizing center (MTOC) upon inflammasome activation. The chain is MAP/microtubule affinity-regulating kinase 4 from Homo sapiens (Human).